The primary structure comprises 102 residues: Secreted RxLR effector protein 61 (102 aa).

An N-terminal signal peptide occupies residues 1 to 22 (MAFQLRIVQHLLHITFLRLPLA). The RxLR-dEER motif lies at 51–60 (RRLRQLNEHR).

This sequence belongs to the RxLR effector family.

Its subcellular location is the secreted. The protein resides in the host chloroplast envelope. The protein localises to the host cytoplasm. It localises to the host nucleus. Effector that partially suppresses the tobacco programmed cell death induced by cell death-inducing proteins. The protein is Secreted RxLR effector protein 61 of Plasmopara viticola (Downy mildew of grapevine).